The sequence spans 100 residues: Urease subunit gamma 1 (100 aa).

This sequence belongs to the urease gamma subunit family. In terms of assembly, heterotrimer of UreA (gamma), UreB (beta) and UreC (alpha) subunits. Three heterotrimers associate to form the active enzyme.

The protein resides in the cytoplasm. It catalyses the reaction urea + 2 H2O + H(+) = hydrogencarbonate + 2 NH4(+). It functions in the pathway nitrogen metabolism; urea degradation; CO(2) and NH(3) from urea (urease route): step 1/1. In terms of biological role, disruption of the ure1 gene cluster suggests that it protects brucellae during their passage through the stomach. The major route of infection in human brucellosis is oral. The polypeptide is Urease subunit gamma 1 (Brucella abortus (strain 2308)).